The chain runs to 591 residues: Paxillin (591 aa).

Methionine 1 is modified (N-acetylmethionine). An LD motif 1 motif is present at residues 3 to 15; the sequence is DLDALLADLESTT. Positions 17–138 are disordered; that stretch reads HISKRPVFLS…SSPTVMSTSL (122 aa). Tyrosine 31 bears the Phosphotyrosine; by PTK6 mark. The segment covering 45 to 54 has biased composition (pro residues); sequence VPPPVPPPPS. Residues 69 to 101 are compositionally biased toward polar residues; that stretch reads WQPSGSRFIHQQPQSSSPVYGSSAKTSSVSNPQ. Residues serine 83 and serine 85 each carry the phosphoserine modification. The residue at position 88 (tyrosine 88) is a Phosphotyrosine. Residue serine 106 is modified to Phosphoserine. Tyrosine 118 carries the phosphotyrosine; by PTK6 modification. Phosphoserine occurs at positions 119, 126, and 130. Positions 121-137 are enriched in polar residues; that stretch reads PNKQKSAESSPTVMSTS. The residue at position 132 (threonine 132) is a Phosphothreonine. Serine 137, serine 140, and serine 143 each carry phosphoserine. Positions 144-156 match the LD motif 2 motif; it reads ELDRLLLELNAVQ. Positions 156–213 are disordered; sequence QHNPPGFPADEANSGPPLPGALSPHYGVPETNSPLGGKAGPLTKEKPKRNGGRGLEDV. Tyrosine 181 bears the Phosphotyrosine mark. The short motif at 216 to 228 is the LD motif 3 element; the sequence is SVESLLDELESSV. Serine 230 is subject to Phosphoserine. The interval 237–260 is disordered; it reads VNQGEMSSPQRVTSTQQQTRISAS. The residue at position 244 (serine 244) is a Phosphoserine; by CDK5. Phosphoserine is present on residues serine 250, serine 258, serine 261, and serine 272. An LD motif 4 motif is present at residues 265 to 276; the sequence is ELDELMASLSDF. Basic and acidic residues predominate over residues 289–300; that stretch reads RCWAADWPRDGG. Positions 289 to 335 are disordered; sequence RCWAADWPRDGGRSSPGGQDEGGFMAQGKTGSSSPPGGPPKPGSQLD. A phosphoserine mark is found at serine 303, serine 322, serine 332, and serine 340. An LD motif 5 motif is present at residues 333–345; that stretch reads QLDSMLGSLQSDL. LIM zinc-binding domains lie at 356–415, 416–473, 474–533, and 534–591; these read GVCG…LFSP, RCYY…DMFA, PKCG…RRGS, and LCSG…KLFC. The residue at position 533 (serine 533) is a Phosphoserine.

Belongs to the paxillin family. Binds to vinculin and to the SH3 domain of SRC. Interacts with GIT1, NUDT16L1/SDOS, PARVA, PARVB, SORBS1 and TGFB1I1. Component of cytoplasmic complexes, which also contain GIT1, ARHGEF6 and PAK1. Binds ASAP2. Interacts with RNF5 and PDCD10. Interacts with NEK3 and this interaction is prolactin-dependent. Interacts with PTK2/FAK1 and PTK2B/PYK2. Interacts with PTK6. Interacts with CD36. Interacts (via cytoplasmic domain) with CEACAM1; the interaction is phosphotyrosyl-dependent. Interacts with PXN; this complex stabilizes actin dynamics. Interacts with TRIM15. Interacts with PAK4; PAK4 acts as a scaffold to suppport PAXI phosphorylation at Ser-272. Post-translationally, phosphorylated by MAPK1/ERK2. Phosphorylated on tyrosine residues during integrin-mediated cell adhesion, embryonic development, fibroblast transformation and following stimulation of cells by mitogens. Phosphorylation at Ser-244 by CDK5 reduces its interaction with PTK2/FAK1 in matrix-cell focal adhesions (MCFA) during oligodendrocytes (OLs) differentiation. Phosphorylation at Tyr-31 and Tyr-118 by PTK6 promote the activation of RAC1 via CRK/CrKII, thereby promoting migration and invasion. Phosphorylation at Ser-250 by SLK is required for PXN redistribution and cell motility. Phosphorylation at Ser-272 promotes focal adhesion disassembly during cell migration.

Its subcellular location is the cytoplasm. The protein localises to the cytoskeleton. It localises to the cell junction. The protein resides in the focal adhesion. It is found in the cell cortex. Its function is as follows. Cytoskeletal protein involved in actin-membrane attachment at sites of cell adhesion to the extracellular matrix (focal adhesion). Recruits other proteins such as TRIM15 to focal adhesion. The polypeptide is Paxillin (PXN) (Pongo abelii (Sumatran orangutan)).